Reading from the N-terminus, the 214-residue chain is MTDTLPTVSRRGLMLVMSSPSGAGKTTISRALLERDPAIGMSVSATTRAPRPGEVDGKDYHFVTVEKFHEMVEKREFLEHARVFDNFYGTPRGPVDEILRSGRDVLFDIDWQGTQQMAQNARADLVSVFVLPPSVEELERRLRGRAQDSDEVVRKRMAKAGDEMSHWPEYDYIVVNIDLDKSIAAVQAILAAERLKRERQVGLPDFVTQLRGGE.

Residues glycine 12 to alanine 191 enclose the Guanylate kinase-like domain. Serine 19 to threonine 26 is an ATP binding site.

The protein belongs to the guanylate kinase family.

It localises to the cytoplasm. It carries out the reaction GMP + ATP = GDP + ADP. In terms of biological role, essential for recycling GMP and indirectly, cGMP. The polypeptide is Guanylate kinase (Paramagnetospirillum magneticum (strain ATCC 700264 / AMB-1) (Magnetospirillum magneticum)).